The following is a 337-amino-acid chain: uncharacterized protein (337 aa).

Residues 1–11 (MSEIEEEEEEG) show a composition bias toward acidic residues. The tract at residues 1–20 (MSEIEEEEEEGSASAITGSR) is disordered. Residue Ser-2 is modified to N-acetylserine. A coiled-coil region spans residues 50 to 130 (ALSTRVSALE…LQRDVSKLEG (81 aa)). Residues 139–242 (LQDDDQNAGT…PISPRRHSVS (104 aa)) are disordered. Over residues 170 to 182 (SSIQSQQASEAIE) the composition is skewed to low complexity. Residues 197–211 (LSASLPLVSQTTTPR) are compositionally biased toward polar residues. Thr-213 carries the post-translational modification Phosphothreonine. Ser-217 carries the post-translational modification Phosphoserine. Over residues 223–233 (ASGTPKTTSRP) the composition is skewed to polar residues. At Thr-226 the chain carries Phosphothreonine. Ser-235 is subject to Phosphoserine.

This is an uncharacterized protein from Arabidopsis thaliana (Mouse-ear cress).